Reading from the N-terminus, the 198-residue chain is Prostamide/prostaglandin F synthase (198 aa).

At Tyr108 the chain carries Phosphotyrosine.

The protein belongs to the peroxiredoxin-like PRXL2 family. Prostamide/prostaglandin F synthase subfamily.

It is found in the cytoplasm. Its subcellular location is the cytosol. The enzyme catalyses prostaglandin H2 + [thioredoxin]-dithiol = prostaglandin F2alpha + [thioredoxin]-disulfide. The catalysed reaction is prostamide F2alpha + [thioredoxin]-disulfide = prostamide H2 + [thioredoxin]-dithiol. Functionally, catalyzes the reduction of prostaglandin-ethanolamide H(2) (prostamide H(2)) to prostamide F(2alpha) with NADPH as proton donor. Also able to reduce prostaglandin H(2) to prostaglandin F(2alpha). This chain is Prostamide/prostaglandin F synthase, found in Homo sapiens (Human).